The following is a 497-amino-acid chain: Guanosine-5'-triphosphate,3'-diphosphate pyrophosphatase (497 aa).

The protein belongs to the GppA/Ppx family. GppA subfamily.

It catalyses the reaction guanosine 3'-diphosphate 5'-triphosphate + H2O = guanosine 3',5'-bis(diphosphate) + phosphate + H(+). It functions in the pathway purine metabolism; ppGpp biosynthesis; ppGpp from GTP: step 2/2. In terms of biological role, catalyzes the conversion of pppGpp to ppGpp. Guanosine pentaphosphate (pppGpp) is a cytoplasmic signaling molecule which together with ppGpp controls the 'stringent response', an adaptive process that allows bacteria to respond to amino acid starvation, resulting in the coordinated regulation of numerous cellular activities. The protein is Guanosine-5'-triphosphate,3'-diphosphate pyrophosphatase of Vibrio parahaemolyticus serotype O3:K6 (strain RIMD 2210633).